Consider the following 435-residue polypeptide: Actin-like protein 7A (435 aa).

Disordered stretches follow at residues 1–20 (MWAP…VGNQ) and 29–65 (QTAS…ERPK). The tract at residues 31–51 (ASLRDGPAKRAVWVRRRSSEP) is required for interaction with TES. Basic and acidic residues predominate over residues 47–65 (RSSEPQEPTESKAAKERPK).

It belongs to the actin family. In terms of assembly, interacts (via N-terminus) with TES (via LIM domain 2). Heterodimer with TES; the heterodimer interacts with ENAH to form a heterotrimer. Interacts with ACTL9. Interacts with CYLC1; the interaction may be relevant for proper acrosome attachment to the nuclear envelope.

The protein localises to the cytoplasm. It localises to the cytoskeleton. It is found in the golgi apparatus. The protein resides in the nucleus. In terms of biological role, essential for normal spermatogenesis and male fertility. Required for normal sperm head morphology, acroplaxome formation, acrosome attachment, and acrosome granule stability. May anchor and stabilize acrosomal adherence to the acroplaxome at least in part by facilitating the presence of F-actin in the subacrosomal space. May play an important role in formation and fusion of Golgi-derived vesicles during acrosome biogenesis. This is Actin-like protein 7A (ACTL7A) from Macaca fascicularis (Crab-eating macaque).